Reading from the N-terminus, the 301-residue chain is Mycothiol acetyltransferase (301 aa).

N-acetyltransferase domains lie at 6–151 (EWRQ…ILRD) and 153–301 (VSLR…QYGR). 79-81 (LFV) serves as a coordination point for acetyl-CoA. Residues Glu180, Lys219, and Glu235 each coordinate 1D-myo-inositol 2-(L-cysteinylamino)-2-deoxy-alpha-D-glucopyranoside. Acetyl-CoA-binding positions include 239 to 241 (VGV) and 246 to 252 (QGGGLGR). Tyr273 contributes to the 1D-myo-inositol 2-(L-cysteinylamino)-2-deoxy-alpha-D-glucopyranoside binding site.

It belongs to the acetyltransferase family. MshD subfamily. In terms of assembly, monomer.

It carries out the reaction 1D-myo-inositol 2-(L-cysteinylamino)-2-deoxy-alpha-D-glucopyranoside + acetyl-CoA = mycothiol + CoA + H(+). Its function is as follows. Catalyzes the transfer of acetyl from acetyl-CoA to desacetylmycothiol (Cys-GlcN-Ins) to form mycothiol. This chain is Mycothiol acetyltransferase, found in Amycolatopsis mediterranei (strain U-32).